The chain runs to 329 residues: MSGVVPTAPEQPAGEMENQTKPPDPRPDAPPEYNSHFLPGPPGTAVPPPTGYPGGLPMGYYSPQQPSTFPLYQPVGGIHPVRYQPGKYPMPNQSVPITWMPGPTPMANCPPGLEYLVQLDNIHVLQHFEPLEMMTCFETNNRYDIKNNSDQMVYIVTEDTDDFTRNAYRTLRPFVLRVTDCMGREIMTMQRPFRCTCCCFCCPSARQELEVQCPPGVTIGFVAEHWNLCRAVYSIQNEKKENVMRVRGPCSTYGCGSDSVFEVKSLDGISNIGSIIRKWNGLLSAMADADHFDIHFPLDLDVKMKAMIFGACFLIDFMYFERSPPQRSR.

A disordered region spans residues 1–51 (MSGVVPTAPEQPAGEMENQTKPPDPRPDAPPEYNSHFLPGPPGTAVPPPTG). A proline-rich domain (PRD) region spans residues 1–98 (MSGVVPTAPE…PMPNQSVPIT (98 aa)). Residues 1–303 (MSGVVPTAPE…IHFPLDLDVK (303 aa)) lie on the Cytoplasmic side of the membrane. An SH3-binding 1 motif is present at residues 18-25 (NQTKPPDP). The PPxY motif motif lies at 30–33 (PPEY). Over residues 39 to 51 (PGPPGTAVPPPTG) the composition is skewed to pro residues. The short motif at 41-49 (PPGTAVPPP) is the SH3-binding 2 element. Residues tyrosine 83 and tyrosine 88 each carry the phosphotyrosine; by ABL modification. An SH3-binding 3 motif is present at residues 98 to 106 (TWMPGPTPM). S-palmitoyl cysteine attachment occurs at residues cysteine 197, cysteine 198, cysteine 199, cysteine 201, and cysteine 202. Residues 271–283 (NIGSIIRKWNGLL) carry the Nuclear localization signal motif. A helical membrane pass occupies residues 304 to 320 (MKAMIFGACFLIDFMYF). Residues 321 to 329 (ERSPPQRSR) are Extracellular-facing.

The protein belongs to the phospholipid scramblase family. In terms of assembly, interacts with PDCD6. Interacts with KPNA2; this interaction mediates the nucleus import of PLSCR4. The cofactor is Ca(2+). Requires Mg(2+) as cofactor. Zn(2+) serves as cofactor. Expressed in heart, brain, placenta, lung, liver, kidney, pancreas, spleen, thymus, prostate, testis, uterus, small intestine and colon. Not detected in peripheral blood lymphocytes.

Its subcellular location is the cell membrane. The protein localises to the nucleus. It carries out the reaction a 1,2-diacyl-sn-glycero-3-phosphocholine(in) = a 1,2-diacyl-sn-glycero-3-phosphocholine(out). The enzyme catalyses a 1,2-diacyl-sn-glycero-3-phospho-L-serine(in) = a 1,2-diacyl-sn-glycero-3-phospho-L-serine(out). In terms of biological role, catalyzes metal ion-induced ATP-independent rapid bidirectional and non-specific movement of phospholipids (lipid scrambling or lipid flip-flop) between the inner and outer leaflet of the plasma membrane and participates in the redistribution of phospholipids between membrane leaflets. Metal ions bind to the calcium-binding site and induce conformation change in the protein. Has a greater affi nity for Ca(2+) than Mg(2+) and Zn(2+). In Homo sapiens (Human), this protein is Phospholipid scramblase 4.